The sequence spans 335 residues: L-threo-3-deoxy-hexylosonate aldolase (335 aa).

50 to 51 (SN) contacts substrate. Catalysis depends on Lys175, which acts as the Schiff-base intermediate with substrate.

The protein belongs to the DapA family.

It carries out the reaction 2-dehydro-3-deoxy-L-galactonate = L-glyceraldehyde + pyruvate. It functions in the pathway carbohydrate acid metabolism. Functionally, mediates the conversion of 2-dehydro-3-deoxy-L-galactonate to pyruvate and L-glyceraldehyde in D-galacturonate catabolic process. In Aspergillus niger, this protein is L-threo-3-deoxy-hexylosonate aldolase (gaaC).